Here is an 875-residue protein sequence, read N- to C-terminus: Valine--tRNA ligase (875 aa).

The 'HIGH' region motif lies at 45-55; the sequence is PNVTGVLHMGH. The 'KMSKS' region motif lies at 524-528; it reads KMSKS. Residue K527 coordinates ATP. A coiled-coil region spans residues 803–837; it reads VKLLIDKTKELIRLEKQLEKYKMLKISVSKKLENE.

Belongs to the class-I aminoacyl-tRNA synthetase family. ValS type 1 subfamily. As to quaternary structure, monomer.

The protein localises to the cytoplasm. The enzyme catalyses tRNA(Val) + L-valine + ATP = L-valyl-tRNA(Val) + AMP + diphosphate. In terms of biological role, catalyzes the attachment of valine to tRNA(Val). As ValRS can inadvertently accommodate and process structurally similar amino acids such as threonine, to avoid such errors, it has a 'posttransfer' editing activity that hydrolyzes mischarged Thr-tRNA(Val) in a tRNA-dependent manner. This chain is Valine--tRNA ligase, found in Borrelia garinii subsp. bavariensis (strain ATCC BAA-2496 / DSM 23469 / PBi) (Borreliella bavariensis).